The sequence spans 200 residues: Small ribosomal subunit protein uS4 (200 aa).

Residues 22–42 are disordered; that stretch reads TGKELEKRPYAPGPHGPGQRK. An S4 RNA-binding domain is found at 92-155; the sequence is TRLDNLVYRL…QNLAVVKESV (64 aa).

The protein belongs to the universal ribosomal protein uS4 family. Part of the 30S ribosomal subunit. Contacts protein S5. The interaction surface between S4 and S5 is involved in control of translational fidelity.

Functionally, one of the primary rRNA binding proteins, it binds directly to 16S rRNA where it nucleates assembly of the body of the 30S subunit. Its function is as follows. With S5 and S12 plays an important role in translational accuracy. The protein is Small ribosomal subunit protein uS4 of Bacillus pumilus (strain SAFR-032).